Consider the following 366-residue polypeptide: Zinc-regulated GTPase metalloprotein activator 1 (366 aa).

Positions 5–12 (DECPELVP) match the psi-PxLVp motif motif. Residue 31–38 (GYLGAGKT) participates in GTP binding. 3 residues coordinate Zn(2+): Cys89, Cys91, and Cys92. The CXCC motif motif lies at 89–92 (CLCC). Residues 92-96 (CSVKD) and 185-188 (NKTD) each bind GTP. The CobW C-terminal domain maps to 258-357 (TITFEVPGSV…GEILKKEFIS (100 aa)).

This sequence belongs to the SIMIBI class G3E GTPase family. ZNG1 subfamily.

It is found in the nucleus. It carries out the reaction GTP + H2O = GDP + phosphate + H(+). In terms of biological role, zinc chaperone that directly transfers zinc cofactor to target metalloproteins, thereby activating them. Catalyzes zinc insertion into the active site of methionine aminopeptidase METAP1, which function to cleave the initiator methionine from polypeptides during or after protein translation. Mechanistically, the N-terminal psi-PxLVp motif binds to the C6H2-type zinc finger of inactive form of METAP1. After formation of the docked complex, zinc is transferred from the CXCC motif in the GTPase domain of ZNG1 to the zinc binding site in the peptidase domain of METAP1 in a process requiring GTP hydrolysis. GTP/GDP exchange is required for release of active METAP1. The sequence is that of Zinc-regulated GTPase metalloprotein activator 1 from Danio rerio (Zebrafish).